The sequence spans 340 residues: CaiB/baiF CoA-transferase family protein ZK892.4 (340 aa).

The active-site Nucleophile is the D154.

It belongs to the CoA-transferase III family.

In Caenorhabditis elegans, this protein is CaiB/baiF CoA-transferase family protein ZK892.4.